Consider the following 290-residue polypeptide: Dual-specificity RNA pseudouridine synthase RluF (290 aa).

One can recognise an S4 RNA-binding domain in the interval 7–74; it reads VRLNKYISES…EDLVLIALNK (68 aa). Interaction with RNA stretches follow at residues 105–108 and 187–190; these read RLDK and RQIR. Catalysis depends on Asp-107, which acts as the Nucleophile. The tract at residues 241–290 is disordered; that stretch reads SEAKPKAKAKPKTVGIKRPVVKMEKTAEKGGRPASNGKRFTSPGRKKKGR. Positions 261–271 are enriched in basic and acidic residues; sequence VKMEKTAEKGG.

It belongs to the pseudouridine synthase RsuA family. As to quaternary structure, monomer.

It carries out the reaction uridine(2604) in 23S rRNA = pseudouridine(2604) in 23S rRNA. It catalyses the reaction uridine(35) in tRNA(Tyr) = pseudouridine(35) in tRNA(Tyr). Its function is as follows. Dual specificity enzyme that catalyzes the synthesis of pseudouridine from uracil-2604 in 23S ribosomal RNA and from uracil-35 in the anticodon of tRNA(Tyr). This chain is Dual-specificity RNA pseudouridine synthase RluF (rluF), found in Escherichia coli O6:H1 (strain CFT073 / ATCC 700928 / UPEC).